Reading from the N-terminus, the 143-residue chain is MKVKIINKSNNPLPKYSTIGSSGMDLRAYTENDITLKPLERTLIPTGIYISIPEGYEIQIRPRSGLSIKHGITLINCVGTIDSDYRGEIKIPVVNLSNEEYTISTGDRICQMILQKYENIEFAEVEVLDETDRNDGGFGHTGY.

Residues 63 to 65 (RSG), Asn-76, 80 to 82 (TID), and Lys-90 contribute to the substrate site.

Belongs to the dUTPase family. The cofactor is Mg(2+).

It catalyses the reaction dUTP + H2O = dUMP + diphosphate + H(+). It participates in pyrimidine metabolism; dUMP biosynthesis; dUMP from dCTP (dUTP route): step 2/2. Its function is as follows. This enzyme is involved in nucleotide metabolism: it produces dUMP, the immediate precursor of thymidine nucleotides and it decreases the intracellular concentration of dUTP so that uracil cannot be incorporated into DNA. This chain is Deoxyuridine 5'-triphosphate nucleotidohydrolase, found in Finegoldia magna (strain ATCC 29328 / DSM 20472 / WAL 2508) (Peptostreptococcus magnus).